We begin with the raw amino-acid sequence, 224 residues long: Acyl-protein thioesterase 1 (224 aa).

Active-site charge relay system residues include S116, D170, and H203.

It belongs to the AB hydrolase superfamily. AB hydrolase 2 family.

The protein localises to the cytoplasm. Its subcellular location is the nucleus. The catalysed reaction is S-hexadecanoyl-L-cysteinyl-[protein] + H2O = L-cysteinyl-[protein] + hexadecanoate + H(+). Its function is as follows. Hydrolyzes fatty acids from S-acylated cysteine residues in proteins with a strong preference for palmitoylated G-alpha proteins over other acyl substrates. Mediates the deacylation of G-alpha proteins such as GPA1 in vivo, but has weak or no activity toward palmitoylated Ras proteins. Has weak lysophospholipase activity in vitro; however such activity may not exist in vivo. In Schizosaccharomyces pombe (strain 972 / ATCC 24843) (Fission yeast), this protein is Acyl-protein thioesterase 1.